Reading from the N-terminus, the 426-residue chain is Glutamate-1-semialdehyde 2,1-aminomutase (426 aa).

Residue K265 is modified to N6-(pyridoxal phosphate)lysine.

This sequence belongs to the class-III pyridoxal-phosphate-dependent aminotransferase family. HemL subfamily. In terms of assembly, homodimer. Pyridoxal 5'-phosphate serves as cofactor.

The protein localises to the cytoplasm. The enzyme catalyses (S)-4-amino-5-oxopentanoate = 5-aminolevulinate. Its pathway is porphyrin-containing compound metabolism; protoporphyrin-IX biosynthesis; 5-aminolevulinate from L-glutamyl-tRNA(Glu): step 2/2. This is Glutamate-1-semialdehyde 2,1-aminomutase from Salmonella heidelberg (strain SL476).